A 97-amino-acid chain; its full sequence is MGSRFFLALFLVILMLGNEVQGNQEDDSGSLALLGTVQGSLLSYWTSAKEVAKDLYQKTYPISMDEKLRDMYSKSSAAMSTYAGIFTDQLLTLLRGE.

Residues 1–22 (MGSRFFLALFLVILMLGNEVQG) form the signal peptide. The tract at residues 63-71 (SMDEKLRDM) is lipid binding. The lipoprotein lipase cofactor stretch occupies residues 75–97 (SSAAMSTYAGIFTDQLLTLLRGE).

This sequence belongs to the apolipoprotein C2 family. In terms of tissue distribution, adult and fetal liver, intestine and peritoneal macrophages.

The protein localises to the secreted. Functionally, component of chylomicrons, very low-density lipoproteins (VLDL), low-density lipoproteins (LDL), and high-density lipoproteins (HDL) in plasma. Plays an important role in lipoprotein metabolism as an activator of lipoprotein lipase. The protein is Apolipoprotein C-II (Apoc2) of Mus musculus (Mouse).